A 178-amino-acid chain; its full sequence is Protein FLOWERING LOCUS T 1 (178 aa).

This sequence belongs to the phosphatidylethanolamine-binding protein family. Expressed in leaves but not in shoot apex.

In terms of biological role, involved in the regulation of vernalization and of flowering time. The protein is Protein FLOWERING LOCUS T 1 of Brachypodium distachyon (Purple false brome).